A 392-amino-acid chain; its full sequence is 23S rRNA (uracil(747)-C(5))-methyltransferase RlmC (392 aa).

Cysteine 4, cysteine 12, cysteine 15, and cysteine 93 together coordinate [4Fe-4S] cluster. Residues glutamine 218, phenylalanine 247, glutamate 275, and asparagine 321 each coordinate S-adenosyl-L-methionine. Catalysis depends on cysteine 348, which acts as the Nucleophile.

The protein belongs to the class I-like SAM-binding methyltransferase superfamily. RNA M5U methyltransferase family. RlmC subfamily.

The catalysed reaction is uridine(747) in 23S rRNA + S-adenosyl-L-methionine = 5-methyluridine(747) in 23S rRNA + S-adenosyl-L-homocysteine + H(+). Its function is as follows. Catalyzes the formation of 5-methyl-uridine at position 747 (m5U747) in 23S rRNA. The polypeptide is 23S rRNA (uracil(747)-C(5))-methyltransferase RlmC (Haemophilus influenzae (strain PittGG)).